The primary structure comprises 328 residues: 4-hydroxythreonine-4-phosphate dehydrogenase (328 aa).

Substrate contacts are provided by His-134 and Thr-135. Residues His-164, His-209, and His-265 each coordinate a divalent metal cation. 3 residues coordinate substrate: Lys-273, Asn-282, and Arg-291.

It belongs to the PdxA family. In terms of assembly, homodimer. Requires Zn(2+) as cofactor. Mg(2+) serves as cofactor. The cofactor is Co(2+).

Its subcellular location is the cytoplasm. The catalysed reaction is 4-(phosphooxy)-L-threonine + NAD(+) = 3-amino-2-oxopropyl phosphate + CO2 + NADH. Its pathway is cofactor biosynthesis; pyridoxine 5'-phosphate biosynthesis; pyridoxine 5'-phosphate from D-erythrose 4-phosphate: step 4/5. Functionally, catalyzes the NAD(P)-dependent oxidation of 4-(phosphooxy)-L-threonine (HTP) into 2-amino-3-oxo-4-(phosphooxy)butyric acid which spontaneously decarboxylates to form 3-amino-2-oxopropyl phosphate (AHAP). This Vibrio vulnificus (strain CMCP6) protein is 4-hydroxythreonine-4-phosphate dehydrogenase.